Consider the following 265-residue polypeptide: Protein IL-40 (265 aa).

The signal sequence occupies residues 1-20 (MGLPGLFCLAVLAASSFSKA). Asn-86 and Asn-132 each carry an N-linked (GlcNAc...) asparagine glycan.

Expressed in fetal liver and bone marrow. Expressed in peripheral blood lymphocyte B cells.

The protein resides in the secreted. Functionally, probable B cell-associated cytokine that plays a role in the regulation of humoral immune responses. Involved in lymphocyte B cell development and immunoglobulin/IgA production. The chain is Protein IL-40 from Homo sapiens (Human).